The chain runs to 39 residues: Antimicrobial peptide CHP1 (39 aa).

Cystine bridges form between Cys-6-Cys-28, Cys-13-Cys-34, and Cys-18-Cys-35.

Functionally, bactericidal activity; inhibits S.aureus and E.coli. In Gallus gallus (Chicken), this protein is Antimicrobial peptide CHP1.